Here is a 212-residue protein sequence, read N- to C-terminus: uncharacterized protein (212 aa).

S-adenosyl-L-methionine contacts are provided by Gly-53, Glu-74, and Asp-97.

Belongs to the methyltransferase superfamily. YrrT family.

In terms of biological role, could be a S-adenosyl-L-methionine-dependent methyltransferase. This is an uncharacterized protein from Bacillus cereus (strain ATCC 10987 / NRS 248).